We begin with the raw amino-acid sequence, 590 residues long: Suprabasin (590 aa).

The first 25 residues, 1 to 25 (MHLARLVGSCSLLLLLGALSGWAAS), serve as a signal peptide directing secretion. Disordered stretches follow at residues 182–213 (GNEA…AHHG), 242–266 (FGQG…GVHH), 297–338 (GQGA…GVHH), and 545–570 (LNGN…SGAS). Low complexity-rich tracts occupy residues 190 to 200 (QGVHHAAGQAG), 243 to 254 (GQGAHHAAGQAG), 297 to 330 (GQGA…NEAG), and 546 to 559 (NGNH…HQGG). The segment covering 560–570 (ATTTPLASGAS) has biased composition (polar residues).

In terms of tissue distribution, detected in thymus, uterus and esophagus.

The protein localises to the secreted. This is Suprabasin (SBSN) from Homo sapiens (Human).